Consider the following 61-residue polypeptide: Large ribosomal subunit protein eL37 (61 aa).

Zn(2+) is bound by residues cysteine 19, cysteine 22, cysteine 34, and cysteine 37. A C4-type zinc finger spans residues 19–37 (CRRCGRNAYNVSKHYCAAC).

This sequence belongs to the eukaryotic ribosomal protein eL37 family. Zn(2+) serves as cofactor.

Binds to the 23S rRNA. This is Large ribosomal subunit protein eL37 from Saccharolobus islandicus (strain Y.N.15.51 / Yellowstone #2) (Sulfolobus islandicus).